The chain runs to 422 residues: 4-hydroxy-3-methylbut-2-en-1-yl diphosphate synthase (flavodoxin) (422 aa).

[4Fe-4S] cluster-binding residues include C316, C319, C362, and E369.

This sequence belongs to the IspG family. Requires [4Fe-4S] cluster as cofactor.

The catalysed reaction is (2E)-4-hydroxy-3-methylbut-2-enyl diphosphate + oxidized [flavodoxin] + H2O + 2 H(+) = 2-C-methyl-D-erythritol 2,4-cyclic diphosphate + reduced [flavodoxin]. It functions in the pathway isoprenoid biosynthesis; isopentenyl diphosphate biosynthesis via DXP pathway; isopentenyl diphosphate from 1-deoxy-D-xylulose 5-phosphate: step 5/6. In terms of biological role, converts 2C-methyl-D-erythritol 2,4-cyclodiphosphate (ME-2,4cPP) into 1-hydroxy-2-methyl-2-(E)-butenyl 4-diphosphate. The sequence is that of 4-hydroxy-3-methylbut-2-en-1-yl diphosphate synthase (flavodoxin) from Anaplasma marginale (strain St. Maries).